A 144-amino-acid chain; its full sequence is Large ribosomal subunit protein uL15 (144 aa).

Over residues 1 to 18 (MRLNDLHPAEGSRPEGKR) the composition is skewed to basic and acidic residues. The interval 1–58 (MRLNDLHPAEGSRPEGKRVGRGIGSGLGKTGGRGHKGQKSRSGGSVKPGFEGGQMPLQ) is disordered. Residues 21–31 (RGIGSGLGKTG) are compositionally biased toward gly residues.

It belongs to the universal ribosomal protein uL15 family. As to quaternary structure, part of the 50S ribosomal subunit.

Functionally, binds to the 23S rRNA. In Alcanivorax borkumensis (strain ATCC 700651 / DSM 11573 / NCIMB 13689 / SK2), this protein is Large ribosomal subunit protein uL15.